Consider the following 72-residue polypeptide: uncharacterized protein (72 aa).

Residues 11–31 (WCCTVLSAFGVVILSVIAHLF) form a helical membrane-spanning segment.

The protein resides in the membrane. This is an uncharacterized protein from Saccharomyces cerevisiae (strain ATCC 204508 / S288c) (Baker's yeast).